A 309-amino-acid polypeptide reads, in one-letter code: Methionyl-tRNA formyltransferase (309 aa).

107–110 contributes to the (6S)-5,6,7,8-tetrahydrofolate binding site; it reads SLLP.

The protein belongs to the Fmt family.

It catalyses the reaction L-methionyl-tRNA(fMet) + (6R)-10-formyltetrahydrofolate = N-formyl-L-methionyl-tRNA(fMet) + (6S)-5,6,7,8-tetrahydrofolate + H(+). In terms of biological role, attaches a formyl group to the free amino group of methionyl-tRNA(fMet). The formyl group appears to play a dual role in the initiator identity of N-formylmethionyl-tRNA by promoting its recognition by IF2 and preventing the misappropriation of this tRNA by the elongation apparatus. This Borrelia recurrentis (strain A1) protein is Methionyl-tRNA formyltransferase.